The primary structure comprises 254 residues: Glucosamine-6-phosphate deaminase (254 aa).

Aspartate 63 (proton acceptor; for enolization step) is an active-site residue. Catalysis depends on asparagine 129, which acts as the For ring-opening step. Histidine 131 functions as the Proton acceptor; for ring-opening step in the catalytic mechanism. Glutamate 136 functions as the For ring-opening step in the catalytic mechanism.

This sequence belongs to the glucosamine/galactosamine-6-phosphate isomerase family. NagB subfamily.

The catalysed reaction is alpha-D-glucosamine 6-phosphate + H2O = beta-D-fructose 6-phosphate + NH4(+). The protein operates within amino-sugar metabolism; N-acetylneuraminate degradation; D-fructose 6-phosphate from N-acetylneuraminate: step 5/5. In terms of biological role, catalyzes the reversible isomerization-deamination of glucosamine 6-phosphate (GlcN6P) to form fructose 6-phosphate (Fru6P) and ammonium ion. This Exiguobacterium sp. (strain ATCC BAA-1283 / AT1b) protein is Glucosamine-6-phosphate deaminase.